A 279-amino-acid chain; its full sequence is 3-methyl-2-oxobutanoate hydroxymethyltransferase (279 aa).

Asp44 and Asp83 together coordinate Mg(2+). 3-methyl-2-oxobutanoate-binding positions include 44–45 (DS), Asp83, and Lys113. Glu115 contributes to the Mg(2+) binding site. Glu182 (proton acceptor) is an active-site residue.

The protein belongs to the PanB family. Homodecamer; pentamer of dimers. Mg(2+) is required as a cofactor.

It localises to the cytoplasm. The enzyme catalyses 3-methyl-2-oxobutanoate + (6R)-5,10-methylene-5,6,7,8-tetrahydrofolate + H2O = 2-dehydropantoate + (6S)-5,6,7,8-tetrahydrofolate. It functions in the pathway cofactor biosynthesis; (R)-pantothenate biosynthesis; (R)-pantoate from 3-methyl-2-oxobutanoate: step 1/2. Catalyzes the reversible reaction in which hydroxymethyl group from 5,10-methylenetetrahydrofolate is transferred onto alpha-ketoisovalerate to form ketopantoate. The sequence is that of 3-methyl-2-oxobutanoate hydroxymethyltransferase from Desulfotalea psychrophila (strain LSv54 / DSM 12343).